The sequence spans 214 residues: MTAVRAPRRRASSDEQGGFDFSRPDEIVCGVDEAGRGPLAGPVVAAAVILDPAQPIDGLDDSKALSAKKRDALYELIVARSLSYCVASASVDEIDTLNILHATMLAMKRAVEGLSVLPTLAQIDGNRCPTLTVRAEAIVSGDALVPSISAASILAKVTRDRMLVDLHERFPVYGFNVHAGYGTAKHLAALREHGPCEAHRRSFAPVRAALDLIR.

In terms of domain architecture, RNase H type-2 spans 26–214 (EIVCGVDEAG…PVRAALDLIR (189 aa)). D32, E33, and D124 together coordinate a divalent metal cation.

It belongs to the RNase HII family. It depends on Mn(2+) as a cofactor. Mg(2+) is required as a cofactor.

The protein localises to the cytoplasm. The catalysed reaction is Endonucleolytic cleavage to 5'-phosphomonoester.. Endonuclease that specifically degrades the RNA of RNA-DNA hybrids. The sequence is that of Ribonuclease HII from Burkholderia lata (strain ATCC 17760 / DSM 23089 / LMG 22485 / NCIMB 9086 / R18194 / 383).